The primary structure comprises 417 residues: Riboflavin biosynthesis protein RibBA (417 aa).

Positions 1–204 (MTRLDSIERA…IADLIEWRRK (204 aa)) are DHBP synthase. Residues 28 to 29 (RE), Asp33, 141 to 145 (RPGHT), and Glu165 contribute to the D-ribulose 5-phosphate site. Glu29 is a Mg(2+) binding site. A Mg(2+)-binding site is contributed by His144. Positions 205–417 (HEKHVQRIAE…LDDHPEADGA (213 aa)) are GTP cyclohydrolase II. 259–263 (RVHSE) provides a ligand contact to GTP. Zn(2+) is bound by residues Cys264, Cys275, and Cys277. Residues Gln280, 303-305 (EGR), and Thr325 contribute to the GTP site. The active-site Proton acceptor; for GTP cyclohydrolase activity is Asp337. The active-site Nucleophile; for GTP cyclohydrolase activity is Arg339. Residues Thr360 and Lys365 each contribute to the GTP site.

In the N-terminal section; belongs to the DHBP synthase family. The protein in the C-terminal section; belongs to the GTP cyclohydrolase II family. The cofactor is Mg(2+). Mn(2+) serves as cofactor. Requires Zn(2+) as cofactor.

The enzyme catalyses D-ribulose 5-phosphate = (2S)-2-hydroxy-3-oxobutyl phosphate + formate + H(+). It catalyses the reaction GTP + 4 H2O = 2,5-diamino-6-hydroxy-4-(5-phosphoribosylamino)-pyrimidine + formate + 2 phosphate + 3 H(+). It participates in cofactor biosynthesis; riboflavin biosynthesis; 2-hydroxy-3-oxobutyl phosphate from D-ribulose 5-phosphate: step 1/1. It functions in the pathway cofactor biosynthesis; riboflavin biosynthesis; 5-amino-6-(D-ribitylamino)uracil from GTP: step 1/4. Functionally, catalyzes the conversion of D-ribulose 5-phosphate to formate and 3,4-dihydroxy-2-butanone 4-phosphate. In terms of biological role, catalyzes the conversion of GTP to 2,5-diamino-6-ribosylamino-4(3H)-pyrimidinone 5'-phosphate (DARP), formate and pyrophosphate. The protein is Riboflavin biosynthesis protein RibBA of Mycobacteroides abscessus (strain ATCC 19977 / DSM 44196 / CCUG 20993 / CIP 104536 / JCM 13569 / NCTC 13031 / TMC 1543 / L948) (Mycobacterium abscessus).